Here is a 219-residue protein sequence, read N- to C-terminus: Holliday junction branch migration complex subunit RuvA (219 aa).

Residues 1–66 (MIEYIIGKIS…NFLFEYYGFK (66 aa)) are domain I. The domain II stretch occupies residues 67–148 (TLREKIFFEN…SEYNNDVNHS (82 aa)). Residues 149 to 154 (SINQQS) are flexible linker. The segment at 155 to 219 (NSYNPVPDLV…EAVTNKTTVS (65 aa)) is domain III.

It belongs to the RuvA family. In terms of assembly, homotetramer. Forms an RuvA(8)-RuvB(12)-Holliday junction (HJ) complex. HJ DNA is sandwiched between 2 RuvA tetramers; dsDNA enters through RuvA and exits via RuvB. An RuvB hexamer assembles on each DNA strand where it exits the tetramer. Each RuvB hexamer is contacted by two RuvA subunits (via domain III) on 2 adjacent RuvB subunits; this complex drives branch migration. In the full resolvosome a probable DNA-RuvA(4)-RuvB(12)-RuvC(2) complex forms which resolves the HJ.

Its subcellular location is the cytoplasm. Functionally, the RuvA-RuvB-RuvC complex processes Holliday junction (HJ) DNA during genetic recombination and DNA repair, while the RuvA-RuvB complex plays an important role in the rescue of blocked DNA replication forks via replication fork reversal (RFR). RuvA specifically binds to HJ cruciform DNA, conferring on it an open structure. The RuvB hexamer acts as an ATP-dependent pump, pulling dsDNA into and through the RuvAB complex. HJ branch migration allows RuvC to scan DNA until it finds its consensus sequence, where it cleaves and resolves the cruciform DNA. This Malacoplasma penetrans (strain HF-2) (Mycoplasma penetrans) protein is Holliday junction branch migration complex subunit RuvA.